Here is a 226-residue protein sequence, read N- to C-terminus: 7-cyano-7-deazaguanine synthase (226 aa).

10 to 20 (LSGGLDSATAA) provides a ligand contact to ATP. Residues C191, C199, C202, and C205 each contribute to the Zn(2+) site.

The protein belongs to the QueC family. It depends on Zn(2+) as a cofactor.

It catalyses the reaction 7-carboxy-7-deazaguanine + NH4(+) + ATP = 7-cyano-7-deazaguanine + ADP + phosphate + H2O + H(+). It participates in purine metabolism; 7-cyano-7-deazaguanine biosynthesis. Functionally, catalyzes the ATP-dependent conversion of 7-carboxy-7-deazaguanine (CDG) to 7-cyano-7-deazaguanine (preQ(0)). This chain is 7-cyano-7-deazaguanine synthase, found in Prochlorococcus marinus (strain MIT 9303).